Here is a 20-residue protein sequence, read N- to C-terminus: Luminal-binding protein (20 aa).

Belongs to the heat shock protein 70 family.

It is found in the endoplasmic reticulum lumen. Functionally, probably plays a role in facilitating the assembly of multimeric protein complexes inside the ER. This Phaseolus vulgaris (Kidney bean) protein is Luminal-binding protein.